Consider the following 445-residue polypeptide: UDP-N-acetylmuramoylalanine--D-glutamate ligase (445 aa).

An ATP-binding site is contributed by 126 to 132; sequence GTSGKTT.

It belongs to the MurCDEF family.

The protein localises to the cytoplasm. It catalyses the reaction UDP-N-acetyl-alpha-D-muramoyl-L-alanine + D-glutamate + ATP = UDP-N-acetyl-alpha-D-muramoyl-L-alanyl-D-glutamate + ADP + phosphate + H(+). The protein operates within cell wall biogenesis; peptidoglycan biosynthesis. Its function is as follows. Cell wall formation. Catalyzes the addition of glutamate to the nucleotide precursor UDP-N-acetylmuramoyl-L-alanine (UMA). This chain is UDP-N-acetylmuramoylalanine--D-glutamate ligase, found in Nitratidesulfovibrio vulgaris (strain DSM 19637 / Miyazaki F) (Desulfovibrio vulgaris).